The following is a 257-amino-acid chain: Zinc transporter ZupT (257 aa).

Helical transmembrane passes span 5–25 (LILT…GVLG), 32–52 (VLAF…LMEM), and 61–81 (GMSP…YFGL). Fe(2+) contacts are provided by N120 and E123. Zn(2+)-binding residues include E123 and H148. Residues N149, E152, and E181 each coordinate Fe(2+). Residue E152 coordinates Zn(2+). 3 helical membrane passes run 182 to 202 (IFGG…IVMA), 203 to 223 (AIMA…LMPL), and 236 to 256 (GVLC…TIGI).

Belongs to the ZIP transporter (TC 2.A.5) family. ZupT subfamily.

Its subcellular location is the cell inner membrane. The catalysed reaction is Zn(2+)(in) = Zn(2+)(out). Its function is as follows. Mediates zinc uptake. May also transport other divalent cations. The polypeptide is Zinc transporter ZupT (Salmonella arizonae (strain ATCC BAA-731 / CDC346-86 / RSK2980)).